Here is a 205-residue protein sequence, read N- to C-terminus: StAR-related lipid transfer protein 4 (205 aa).

An START domain is found at 1–205 (MEGLSDVASF…NFYGDLRKAL (205 aa)).

The catalysed reaction is cholesterol(in) = cholesterol(out). In terms of biological role, involved in the intracellular transport of cholesterol. Binds cholesterol or other sterols. The sequence is that of StAR-related lipid transfer protein 4 (STARD4) from Homo sapiens (Human).